A 196-amino-acid chain; its full sequence is Probable splicing factor, arginine/serine-rich 4 (196 aa).

One can recognise an RRM domain in the interval 19 to 97 (TSLKIDNLSY…RELRVTLAKY (79 aa)). The span at 91 to 106 (RVTLAKYDRPSDERGG) shows a compositional bias: basic and acidic residues. Positions 91-196 (RVTLAKYDRP…SPSRSRSNSR (106 aa)) are disordered. Residues 112-141 (GRRRSRSPRRRSRSPRYSRSRSPRRSRSRT) are compositionally biased toward basic residues. Basic and acidic residues-rich tracts occupy residues 145 to 160 (PSRD…DNSR) and 167 to 176 (PPREDGSPKE). Residues 184-196 (ASRSPSRSRSNSR) show a composition bias toward low complexity.

Belongs to the splicing factor SR family. Post-translationally, extensively phosphorylated on serine residues in the RS domain.

It localises to the nucleus. Its function is as follows. May play a functionally redundant role in embryogenesis. This chain is Probable splicing factor, arginine/serine-rich 4 (rsp-4), found in Caenorhabditis elegans.